We begin with the raw amino-acid sequence, 189 residues long: 7-methyl-GTP pyrophosphatase (189 aa).

Catalysis depends on aspartate 71, which acts as the Proton acceptor.

The protein belongs to the Maf family. YceF subfamily. A divalent metal cation serves as cofactor.

The protein resides in the cytoplasm. It carries out the reaction N(7)-methyl-GTP + H2O = N(7)-methyl-GMP + diphosphate + H(+). Its function is as follows. Nucleoside triphosphate pyrophosphatase that hydrolyzes 7-methyl-GTP (m(7)GTP). May have a dual role in cell division arrest and in preventing the incorporation of modified nucleotides into cellular nucleic acids. This chain is 7-methyl-GTP pyrophosphatase, found in Bdellovibrio bacteriovorus (strain ATCC 15356 / DSM 50701 / NCIMB 9529 / HD100).